The chain runs to 574 residues: Sodium/hydrogen exchanger 8 (574 aa).

11 helical membrane passes run 53-73 (MTIF…HLLI), 77-97 (LHFL…GAFI), 116-136 (PNMF…YSLH), 149-169 (LFSV…IYFL), 184-204 (FAFG…IFNA), 254-274 (LGYF…TGLI), 304-324 (GLAE…GIVM), 347-367 (VAFM…FSFP), 373-393 (SFVI…IFPL), 410-430 (MFIM…SLHL), and 444-464 (TTII…MPLI).

This sequence belongs to the monovalent cation:proton antiporter 1 (CPA1) transporter (TC 2.A.36) family.

The protein resides in the golgi apparatus membrane. Its function is as follows. Involved in pH regulation to eliminate acids generated by active metabolism or to counter adverse environmental conditions. Major proton extruding system driven by the inward sodium ion chemical gradient. Plays an important role in signal transduction. This chain is Sodium/hydrogen exchanger 8, found in Gallus gallus (Chicken).